We begin with the raw amino-acid sequence, 436 residues long: GTPase Der (436 aa).

EngA-type G domains are found at residues 4 to 167 and 175 to 351; these read PTVA…PVEE and IRFS…ESQN. Residues 10–17, 57–61, 119–122, 181–188, 229–233, and 294–297 each bind GTP; these read GRPNVGKS, DTGGI, NKVD, DTAGM, and NKWD. The 85-residue stretch at 352-436 folds into the KH-like domain; that stretch reads KRIPSAVLND…PINLIARKRK (85 aa).

Belongs to the TRAFAC class TrmE-Era-EngA-EngB-Septin-like GTPase superfamily. EngA (Der) GTPase family. As to quaternary structure, associates with the 50S ribosomal subunit.

Its function is as follows. GTPase that plays an essential role in the late steps of ribosome biogenesis. This chain is GTPase Der, found in Streptococcus agalactiae serotype Ia (strain ATCC 27591 / A909 / CDC SS700).